A 125-amino-acid polypeptide reads, in one-letter code: Small ribosomal subunit protein uS12 (125 aa).

The tract at residues 1–28 (MPTISQLIGSERKRLTRKTKSPALKSCP) is disordered. At Asp89 the chain carries 3-methylthioaspartic acid. The disordered stretch occupies residues 104 to 125 (TAGVKDRRQSRSKYGAKAPKND).

This sequence belongs to the universal ribosomal protein uS12 family. Part of the 30S ribosomal subunit. Contacts proteins S8 and S17. May interact with IF1 in the 30S initiation complex.

Functionally, with S4 and S5 plays an important role in translational accuracy. In terms of biological role, interacts with and stabilizes bases of the 16S rRNA that are involved in tRNA selection in the A site and with the mRNA backbone. Located at the interface of the 30S and 50S subunits, it traverses the body of the 30S subunit contacting proteins on the other side and probably holding the rRNA structure together. The combined cluster of proteins S8, S12 and S17 appears to hold together the shoulder and platform of the 30S subunit. This chain is Small ribosomal subunit protein uS12, found in Prochlorococcus marinus subsp. pastoris (strain CCMP1986 / NIES-2087 / MED4).